The chain runs to 302 residues: Probable alpha-L-glutamate ligase (302 aa).

One can recognise an ATP-grasp domain in the interval Met104–Glu287. ATP contacts are provided by residues Lys141, Glu178–Phe179, Asp187, and Arg211–Asn213. Residues Asp248, Glu260, and Asn262 each coordinate Mg(2+). 3 residues coordinate Mn(2+): Asp248, Glu260, and Asn262.

It belongs to the RimK family. Mg(2+) is required as a cofactor. The cofactor is Mn(2+).

The polypeptide is Probable alpha-L-glutamate ligase (Psychromonas ingrahamii (strain DSM 17664 / CCUG 51855 / 37)).